A 177-amino-acid polypeptide reads, in one-letter code: Large ribosomal subunit protein uL6 (177 aa).

It belongs to the universal ribosomal protein uL6 family. Part of the 50S ribosomal subunit.

Its function is as follows. This protein binds to the 23S rRNA, and is important in its secondary structure. It is located near the subunit interface in the base of the L7/L12 stalk, and near the tRNA binding site of the peptidyltransferase center. The chain is Large ribosomal subunit protein uL6 from Neisseria gonorrhoeae (strain ATCC 700825 / FA 1090).